The primary structure comprises 569 residues: Peroxynitrite isomerase THAP4 (569 aa).

The THAP-type zinc-finger motif lies at 1–85 (MVICCAAVNC…LKPTAVPSIF (85 aa)). The disordered stretch occupies residues 88 to 216 (SEKKRGAGGH…DKSGISMDDF (129 aa)). 2 stretches are compositionally biased toward polar residues: residues 121 to 130 (IGSSLSSSDN) and 157 to 167 (AVSQEQGQSLE). Phosphoserine is present on Ser159. An HCFC1-binding motif (HBM) motif is present at residues 230-233 (LHSY). Ser234 carries the post-translational modification Phosphoserine. Positions 235–312 (FSSKHTRERP…EAVQSEHSDA (78 aa)) are disordered. Residues 242–262 (ERPSVPREPMDRKRLKREMEP) are compositionally biased toward basic and acidic residues. Residues 265 to 279 (SGNSVAQSPPSSSLT) are compositionally biased toward polar residues. Low complexity predominate over residues 280–289 (ATPQKASQSP). Residues 407-569 (PPKLNPVVEP…LHITYKKVTP (163 aa)) form a nitrobindin region. Heme b contacts are provided by Thr436 and His559.

It in the C-terminal section; belongs to the nitrobindin family. Homodimer. Requires heme b as cofactor.

The protein localises to the cytoplasm. It localises to the nucleus. It catalyses the reaction peroxynitrite = nitrate. Its pathway is nitrogen metabolism. In terms of biological role, heme-binding protein able to scavenge peroxynitrite and to protect free L-tyrosine against peroxynitrite-mediated nitration, by acting as a peroxynitrite isomerase that converts peroxynitrite to nitrate. Therefore, this protein likely plays a role in peroxynitrite sensing and in the detoxification of reactive nitrogen and oxygen species (RNS and ROS, respectively). Is able to bind nitric oxide (NO) in vitro, but may act as a sensor of peroxynitrite levels in vivo, possibly modulating the transcriptional activity residing in the N-terminal region. This is Peroxynitrite isomerase THAP4 from Mus musculus (Mouse).